A 299-amino-acid polypeptide reads, in one-letter code: 4-diphosphocytidyl-2-C-methyl-D-erythritol kinase (299 aa).

Lys-11 is an active-site residue. Position 94–104 (94–104 (PQGGGLGGGSS)) interacts with ATP. The active site involves Asp-136.

Belongs to the GHMP kinase family. IspE subfamily.

It carries out the reaction 4-CDP-2-C-methyl-D-erythritol + ATP = 4-CDP-2-C-methyl-D-erythritol 2-phosphate + ADP + H(+). It functions in the pathway isoprenoid biosynthesis; isopentenyl diphosphate biosynthesis via DXP pathway; isopentenyl diphosphate from 1-deoxy-D-xylulose 5-phosphate: step 3/6. In terms of biological role, catalyzes the phosphorylation of the position 2 hydroxy group of 4-diphosphocytidyl-2C-methyl-D-erythritol. This Bordetella pertussis (strain Tohama I / ATCC BAA-589 / NCTC 13251) protein is 4-diphosphocytidyl-2-C-methyl-D-erythritol kinase.